We begin with the raw amino-acid sequence, 261 residues long: Ice-binding protein (261 aa).

A signal peptide spans 1–20; sequence MSLLSIITIGLAGLGGLVNG. Residue N185 is glycosylated (N-linked (GlcNAc...) asparagine).

It belongs to the ice-binding protein family. Homodimer. Dimerization is not required for the thermal hysteresis (TH) activity. Glycosylated. Glycosylation is not required for the thermal hysteresis (TH) activity. Glycosylation may increase stability and secretion of this protein.

The protein localises to the secreted. In terms of biological role, confers freeze tolerance. Binds to the surface of ice crystals and inhibits their growth. Has low thermal hysteresis (TH) activity, which is the ability to lower the freezing point of an aqueous solution below its melting point. The TH activity of this protein is approximately 0.2 degrees Celsius at 50 uM and 0.3 degrees Celsius at 400 uM. This is Ice-binding protein from Leucosporidium sp. (strain AY30) (Arctic yeast).